We begin with the raw amino-acid sequence, 281 residues long: Pantothenate synthetase (281 aa).

30–37 (MGYLHEGH) lines the ATP pocket. H37 serves as the catalytic Proton donor. Q60 contacts (R)-pantoate. Q60 contacts beta-alanine. 146 to 149 (GEKD) is a binding site for ATP. Q152 is a binding site for (R)-pantoate. ATP-binding positions include I175 and 183–186 (KSSR).

Belongs to the pantothenate synthetase family. Homodimer.

The protein localises to the cytoplasm. The enzyme catalyses (R)-pantoate + beta-alanine + ATP = (R)-pantothenate + AMP + diphosphate + H(+). Its pathway is cofactor biosynthesis; (R)-pantothenate biosynthesis; (R)-pantothenate from (R)-pantoate and beta-alanine: step 1/1. In terms of biological role, catalyzes the condensation of pantoate with beta-alanine in an ATP-dependent reaction via a pantoyl-adenylate intermediate. The sequence is that of Pantothenate synthetase from Ruminiclostridium cellulolyticum (strain ATCC 35319 / DSM 5812 / JCM 6584 / H10) (Clostridium cellulolyticum).